Reading from the N-terminus, the 261-residue chain is Uridine-cytidine kinase 2 (261 aa).

A compositionally biased stretch (polar residues) spans M1–N16. The interval M1–G24 is disordered. Residue A2 is modified to N-acetylalanine. An ATP-binding site is contributed by G27–S35. Substrate contacts are provided by D84, Y112, H117, R166, R176, and Q184. D213 contacts ATP. A disordered region spans residues G240–H261. Phosphoserine is present on S254.

The protein belongs to the uridine kinase family. Homotetramer.

The enzyme catalyses uridine + ATP = UMP + ADP + H(+). It carries out the reaction cytidine + ATP = CMP + ADP + H(+). Its pathway is pyrimidine metabolism; CTP biosynthesis via salvage pathway; CTP from cytidine: step 1/3. It functions in the pathway pyrimidine metabolism; UMP biosynthesis via salvage pathway; UMP from uridine: step 1/1. In terms of biological role, phosphorylates uridine and cytidine to uridine monophosphate and cytidine monophosphate. Does not phosphorylate deoxyribonucleosides or purine ribonucleosides. Can use ATP or GTP as a phosphate donor. The sequence is that of Uridine-cytidine kinase 2 (Uck2) from Mus musculus (Mouse).